The chain runs to 549 residues: Cation/acetate symporter ActP (549 aa).

The Periplasmic portion of the chain corresponds to 1–32; it reads MKRVLTALAATLPFAANAADAISGAVERQPTN. The helical transmembrane segment at 33 to 55 threads the bilayer; it reads WQAIIMFLIFVVFTLGITYWASK. Over 56-75 the chain is Cytoplasmic; sequence RVRSRNDYYTAGGNITGFQN. A helical transmembrane segment spans residues 76 to 98; that stretch reads GLAIAGDYMSAASFLGISALVFT. The Periplasmic segment spans residues 99–102; sequence SGYD. Residues 103 to 125 traverse the membrane as a helical segment; the sequence is GLIYSLGFLVGWPIILFLIAERL. Residues 126–145 lie on the Cytoplasmic side of the membrane; the sequence is RNLGRYTFADVASYRLKQGP. The chain crosses the membrane as a helical span at residues 146–168; it reads IRILSACGSLVVVALYLIAQMVG. At 169-182 the chain is on the periplasmic side; sequence AGKLIELLFGLNYH. Residues 183 to 205 traverse the membrane as a helical segment; it reads IAVVLVGVLMMMYVLFGGMLATT. The Cytoplasmic segment spans residues 206–211; sequence WVQIIK. A helical transmembrane segment spans residues 212–234; it reads AVLLLFGASFMAFMVMKHVGFSF. Over 235 to 263 the chain is Periplasmic; the sequence is NNLFSEAMAVHPKGVDIMKPGGLVKDPIS. Residues 264-286 traverse the membrane as a helical segment; the sequence is ALSLGLGLMFGTAGLPHILMHFF. Over 287-297 the chain is Cytoplasmic; sequence TVSDAREARKS. Residues 298 to 320 traverse the membrane as a helical segment; it reads VFYATGFMGYFYILTFIIGFGAI. Residues 321–358 are Periplasmic-facing; it reads MLVGANPEYKDAAGHLIGGNNMAAVHLANAVGGNLFLG. The chain crosses the membrane as a helical span at residues 359-381; sequence FISAVAFATILAVVAGLTLAGAS. At 382 to 401 the chain is on the cytoplasmic side; the sequence is AVSHDLYANVFKKGATEREE. A helical transmembrane segment spans residues 402 to 424; sequence LRVSKITVLILGVIAIILGVLFE. The Periplasmic portion of the chain corresponds to 425-427; sequence NQN. The chain crosses the membrane as a helical span at residues 428–450; that stretch reads IAFMVGLAFAIAASCNFPIILLS. The Cytoplasmic portion of the chain corresponds to 451–461; sequence MYWSKLTTRGA. Residues 462–484 traverse the membrane as a helical segment; the sequence is MLGGWLGLITAVVLMILGPTIWV. The Periplasmic portion of the chain corresponds to 485–493; it reads QILGHEKAI. A helical membrane pass occupies residues 494-516; it reads FPYEYPALFSISVAFLGIWLFSA. Topologically, residues 517–549 are cytoplasmic; sequence TDNSAEGARERELFRAQFIRSQTGFGVEQGRAH.

Belongs to the sodium:solute symporter (SSF) (TC 2.A.21) family.

It is found in the cell inner membrane. In terms of biological role, transports acetate. This chain is Cation/acetate symporter ActP (actP), found in Escherichia coli O6:H1 (strain CFT073 / ATCC 700928 / UPEC).